Reading from the N-terminus, the 260-residue chain is MTKVLVEPDPEEVKQLSEALGRQPVILAGICEAEYRGRAESVAGPALRIAMCKPDGTFILHNAMEKREPTNWNPAPSRQSIEVRDGCVVLRSRRLDVPEEVVVYFHKVLLACSLPKEGAKSEDSVFSLFRSEEDMKRVIREDPSVIEPGFRPVGEEVECGAGVADVVGYDEEGRFVVLELKRTRAGVSAASQLRRYVEAFREERGEEVRGILVAPSVTDRCRRLLEKYGLEWKKLEPVPLRDDGGKKQCTLTEFLAGEGD.

This sequence belongs to the NucS endonuclease family.

It is found in the cytoplasm. Its function is as follows. Cleaves both 3' and 5' ssDNA extremities of branched DNA structures. This Methanopyrus kandleri (strain AV19 / DSM 6324 / JCM 9639 / NBRC 100938) protein is Endonuclease NucS.